Here is a 121-residue protein sequence, read N- to C-terminus: Heme-degrading monooxygenase (121 aa).

Residues 2–101 (IIVTNTIKVE…EQREDRKGIV (100 aa)) form the ABM domain. Position 6 (asparagine 6) interacts with Fe cation. Positions 76 to 98 (KSDSFKKAHGRTKDTREQREDRK) are disordered. Over residues 78 to 98 (DSFKKAHGRTKDTREQREDRK) the composition is skewed to basic and acidic residues. Histidine 84 lines the heme pocket.

The protein belongs to the antibiotic biosynthesis monooxygenase family. Heme-degrading monooxygenase IsdG subfamily. As to quaternary structure, homodimer.

It localises to the cytoplasm. It carries out the reaction heme b + 3 reduced [NADPH--hemoprotein reductase] + 3 O2 = biliverdin IXalpha + CO + Fe(2+) + 3 oxidized [NADPH--hemoprotein reductase] + 3 H2O + H(+). Allows bacterial pathogens to use the host heme as an iron source. Catalyzes the oxidative degradation of the heme macrocyclic porphyrin ring to the biliverdin in the presence of a suitable electron donor such as ascorbate or NADPH--cytochrome P450 reductase, with subsequent release of free iron. This Listeria innocua serovar 6a (strain ATCC BAA-680 / CLIP 11262) protein is Heme-degrading monooxygenase.